The chain runs to 1390 residues: Nuclear pore complex protein 14 (1390 aa).

2 stretches are compositionally biased toward polar residues: residues 434-455 (SQKP…STVF) and 464-521 (LKSS…STPK). 3 disordered regions span residues 434-530 (SQKP…KISD), 851-874 (PSSS…TQAD), and 985-1118 (QEIE…SKAA). The segment covering 851–864 (PSSSLFSASPSTPS) has biased composition (low complexity). Residues 986 to 1033 (EIEKASSKVETLNKTEEVKDEKSENEVTPDLKSEEPKSLETKVKEEPK) are compositionally biased toward basic and acidic residues. Over residues 1051–1071 (KTPSFSFNSTTTPKSTSSTSS) the composition is skewed to low complexity. Residues 1073-1074 (FG) form repeat 1. Positions 1073 to 1373 (FGGGLKTQTP…TPAPTSSVFG (301 aa)) are 17 X 2 AA repeats of F-G. The segment covering 1078-1090 (KTQTPSSSNSTNI) has biased composition (polar residues). Copy 2 of the repeat occupies 1091–1092 (FG). Residues 1095-1109 (TTTTATPTPASNTSS) show a composition bias toward low complexity. Repeat copies occupy residues 1111–1112 (FG), 1122–1123 (FG), 1125–1126 (FG), 1163–1164 (FG), 1166–1167 (FG), and 1178–1179 (FG). The disordered stretch occupies residues 1183–1280 (TAPTVPNVDD…QASAPATGTS (98 aa)). Over residues 1201–1210 (NGGGSGGFMS) the composition is skewed to gly residues. A compositionally biased stretch (low complexity) spans 1231–1243 (TSTGTSASSSSWL). Copy 9 of the repeat occupies 1244-1245 (FG). A compositionally biased stretch (low complexity) spans 1264 to 1280 (TAGSSAQQASAPATGTS). 8 repeat units span residues 1283 to 1284 (FG), 1289 to 1290 (FG), 1295 to 1296 (FG), 1300 to 1301 (FG), 1315 to 1316 (FG), 1344 to 1345 (FG), 1357 to 1358 (FG), and 1372 to 1373 (FG). The span at 1342 to 1371 (SLFGGGATPQTNTSIFGGGANTTPAPTSSV) shows a compositional bias: polar residues. Residues 1342-1390 (SLFGGGATPQTNTSIFGGGANTTPAPTSSVFGGGASANANKPTSFTSWR) are disordered. Over residues 1378-1390 (ANANKPTSFTSWR) the composition is skewed to polar residues.

Interacts with caspase ced-3 (via propeptide); the interaction tethers ced-3 to the nuclear membrane and prevents its autoprocessing in absence of ced-4.

The protein localises to the nucleus. It is found in the nuclear pore complex. The protein resides in the nucleus membrane. In terms of biological role, may serve as a docking site in the receptor-mediated import of substrates across the nuclear pore complex. Plays a role in apoptosis by tethering caspase ced-3 to the nuclear membrane preventing its autoprocessing in absence of ced-4. The polypeptide is Nuclear pore complex protein 14 (Caenorhabditis elegans).